A 511-amino-acid chain; its full sequence is 2,3-bisphosphoglycerate-independent phosphoglycerate mutase (511 aa).

Mn(2+) is bound by residues Asp-14 and Ser-64. Ser-64 (phosphoserine intermediate) is an active-site residue. Substrate-binding positions include His-125, 155–156 (RD), Arg-187, Arg-193, 259–262 (RADR), and Lys-333. 5 residues coordinate Mn(2+): Asp-400, His-404, Asp-441, His-442, and His-460.

It belongs to the BPG-independent phosphoglycerate mutase family. Monomer. Mn(2+) is required as a cofactor.

The enzyme catalyses (2R)-2-phosphoglycerate = (2R)-3-phosphoglycerate. It participates in carbohydrate degradation; glycolysis; pyruvate from D-glyceraldehyde 3-phosphate: step 3/5. Functionally, catalyzes the interconversion of 2-phosphoglycerate and 3-phosphoglycerate. This Pseudomonas putida (strain GB-1) protein is 2,3-bisphosphoglycerate-independent phosphoglycerate mutase.